The chain runs to 588 residues: Oxidoreductase NdmD (588 aa).

In terms of domain architecture, Rieske spans 9–114 (WFPIATTEDL…VREKHGFIWT (106 aa)). [2Fe-2S] cluster-binding residues include Cys50, His52, Cys69, and His72. The FAD-binding FR-type domain maps to 272–373 (PTHYICEVVT…TLPRNGFPLV (102 aa)). Residues 503-588 (YEVELKKTGQ…CKSKKIVLDL (86 aa)) form the 2Fe-2S ferredoxin-type domain. Cys537, Cys542, Cys545, and Cys575 together coordinate [2Fe-2S] cluster.

The cofactor is [2Fe-2S] cluster.

Involved in the caffeine degradation, which is the essential first step for assimilating the carbon and nitrogen in caffeine. Catalyzes the oxidation of NADH and transfers electrons to NdmA and NdmB, which catalyze the N-demethylation reactions. In Pseudomonas putida (Arthrobacter siderocapsulatus), this protein is Oxidoreductase NdmD (ndmD).